A 61-amino-acid polypeptide reads, in one-letter code: Metallothionein-1E (61 aa).

At Met-1 the chain carries N-acetylmethionine. The tract at residues 1-29 (MDPNCSCATGGSCTCAGSCKCKECKCTSC) is beta. 20 residues coordinate a divalent metal cation: Cys-5, Cys-7, Cys-13, Cys-15, Cys-19, Cys-21, Cys-24, Cys-26, Cys-29, Cys-33, Cys-34, Cys-36, Cys-37, Cys-41, Cys-44, Cys-48, Cys-50, Cys-57, Cys-59, and Cys-60. The alpha stretch occupies residues 30-61 (KKSCCSCCPVGCAKCAQGCVCKGASEKCSCCA).

Belongs to the metallothionein superfamily. Type 1 family. In terms of assembly, monomer.

In terms of biological role, metallothioneins have a high content of cysteine residues that bind various heavy metals; these proteins are transcriptionally regulated by both heavy metals and glucocorticoids. The sequence is that of Metallothionein-1E (MT1E) from Homo sapiens (Human).